The following is a 434-amino-acid chain: MGIKNLKSLLLENKSLTILDDNLYKVYNGIFVDTMSIYIAVANCVRNLEELTTVFIKYVNGWVKKGGHVTLFIDRGSIKIKQDVRDKRRKYSKLTKDRKMLELEKCTSEIQNVTGFMEEEIKAEMQLKIDKLTFQIYLSDYDNIKISLNEILTHFNNNENVTLFYCDERDAEFVMCLEAKTQFSTTGEWPLIISTDQDTMLFASADNHPKMIKNLTQLFKFVPSAEDNYLAKLTALVNGCDFFPGLYGASITPNNLNKIQLFSDFTIDNIVTSLAIKNYYRKTNSTVDVRNIVTFINDYANLDDVYSYIPPCQCTVQEFIFSALDEKWNEFKSSYLESVPLPCQLMYALEPRKEIDVSEVKTLSSYIDFENTKSDIDVIKSISSIFGYSNENCNTIVFGIYKDNLLLSINNSFYFNDSLLITNTKSDNIINIGY.

Belongs to the XPG/RAD2 endonuclease family. FEN1 subfamily. Requires Mg(2+) as cofactor.

The protein resides in the virion. Functionally, putative nuclease that seems to be required for double-strand break repair, homologous recombination, and production of full-length viral genomic DNA. The protein is Putative nuclease OPG089 (OPG089) of Monkeypox virus.